The following is a 291-amino-acid chain: Nucleotide-binding protein LMHCC_0126 (291 aa).

13–20 (GMSGAGKT) is an ATP binding site. 63-66 (DLRG) contacts GTP.

This sequence belongs to the RapZ-like family.

In terms of biological role, displays ATPase and GTPase activities. The polypeptide is Nucleotide-binding protein LMHCC_0126 (Listeria monocytogenes serotype 4a (strain HCC23)).